Consider the following 246-residue polypeptide: 5'-nucleotidase SurE (246 aa).

A divalent metal cation is bound by residues Asp8, Asp9, Ser39, and Asn91.

It belongs to the SurE nucleotidase family. A divalent metal cation is required as a cofactor.

The protein resides in the cytoplasm. It carries out the reaction a ribonucleoside 5'-phosphate + H2O = a ribonucleoside + phosphate. Functionally, nucleotidase that shows phosphatase activity on nucleoside 5'-monophosphates. In Histophilus somni (strain 129Pt) (Haemophilus somnus), this protein is 5'-nucleotidase SurE.